The chain runs to 738 residues: Eukaryotic translation initiation factor 3 subunit B (738 aa).

A compositionally biased stretch (polar residues) spans 1–10 (MAPSFENLSE). The segment at 1 to 20 (MAPSFENLSEQDLHEEEEEE) is disordered. Positions 40–126 (TFVVIDGLPV…HTLLVNKLMD (87 aa)) constitute an RRM domain. WD repeat units follow at residues 193–230 (AHWTQLFVQWSPKGTYLASVHPQGVQLWGGPTFSKQKQ), 232–289 (PHPF…RSFV), 301–342 (QPKK…LLGK), 454–494 (SLKD…SFFA), 511–554 (IEKK…EKND), and 569–607 (VDHYGVTDIEWDPTGRYVVSGASAWTHQMENGFNLHTFS). The segment at 693–720 (EAYGLPEEADQPKAAKDAPTNTEDKGET) is disordered. The segment covering 702–720 (DQPKAAKDAPTNTEDKGET) has biased composition (basic and acidic residues).

The protein belongs to the eIF-3 subunit B family. Component of the eukaryotic translation initiation factor 3 (eIF-3) complex.

It is found in the cytoplasm. In terms of biological role, RNA-binding component of the eukaryotic translation initiation factor 3 (eIF-3) complex, which is involved in protein synthesis of a specialized repertoire of mRNAs and, together with other initiation factors, stimulates binding of mRNA and methionyl-tRNAi to the 40S ribosome. The eIF-3 complex specifically targets and initiates translation of a subset of mRNAs involved in cell proliferation. This Emericella nidulans (strain FGSC A4 / ATCC 38163 / CBS 112.46 / NRRL 194 / M139) (Aspergillus nidulans) protein is Eukaryotic translation initiation factor 3 subunit B (prt1).